A 319-amino-acid polypeptide reads, in one-letter code: Cell division protein FtsQ (319 aa).

The tract at residues 1–53 is disordered; the sequence is MDSREDMVPDVLLEAPNPRRRQSADTSTERPTRPARREQGYARVTPRGERMGN. Topologically, residues 1–70 are cytoplasmic; that stretch reads MDSREDMVPD…PDFFAWFDPR (70 aa). Positions 27–52 are enriched in basic and acidic residues; that stretch reads STERPTRPARREQGYARVTPRGERMG. Residues 71 to 87 form a helical membrane-spanning segment; it reads WLWVPLMVCLAVGGYWA. Over 88 to 319 the chain is Periplasmic; it reads YEPLEKLLER…NATRNAPTHP (232 aa). A POTRA domain is found at 97-166; sequence RPFKSVVVEG…DTLVVKIAEQ (70 aa).

This sequence belongs to the FtsQ/DivIB family. FtsQ subfamily. As to quaternary structure, part of a complex composed of FtsB, FtsL and FtsQ.

It localises to the cell inner membrane. Its function is as follows. Essential cell division protein. May link together the upstream cell division proteins, which are predominantly cytoplasmic, with the downstream cell division proteins, which are predominantly periplasmic. May control correct divisome assembly. In Cellvibrio japonicus (strain Ueda107) (Pseudomonas fluorescens subsp. cellulosa), this protein is Cell division protein FtsQ.